The chain runs to 174 residues: Crossover junction endodeoxyribonuclease RuvC (174 aa).

Catalysis depends on residues D8, E67, and D139. Mg(2+) contacts are provided by D8, E67, and D139.

This sequence belongs to the RuvC family. As to quaternary structure, homodimer which binds Holliday junction (HJ) DNA. The HJ becomes 2-fold symmetrical on binding to RuvC with unstacked arms; it has a different conformation from HJ DNA in complex with RuvA. In the full resolvosome a probable DNA-RuvA(4)-RuvB(12)-RuvC(2) complex forms which resolves the HJ. The cofactor is Mg(2+).

The protein localises to the cytoplasm. The catalysed reaction is Endonucleolytic cleavage at a junction such as a reciprocal single-stranded crossover between two homologous DNA duplexes (Holliday junction).. The RuvA-RuvB-RuvC complex processes Holliday junction (HJ) DNA during genetic recombination and DNA repair. Endonuclease that resolves HJ intermediates. Cleaves cruciform DNA by making single-stranded nicks across the HJ at symmetrical positions within the homologous arms, yielding a 5'-phosphate and a 3'-hydroxyl group; requires a central core of homology in the junction. The consensus cleavage sequence is 5'-(A/T)TT(C/G)-3'. Cleavage occurs on the 3'-side of the TT dinucleotide at the point of strand exchange. HJ branch migration catalyzed by RuvA-RuvB allows RuvC to scan DNA until it finds its consensus sequence, where it cleaves and resolves the cruciform DNA. The polypeptide is Crossover junction endodeoxyribonuclease RuvC (Pseudomonas putida (strain ATCC 47054 / DSM 6125 / CFBP 8728 / NCIMB 11950 / KT2440)).